A 499-amino-acid polypeptide reads, in one-letter code: Serine/threonine-protein phosphatase 5 (499 aa).

The tract at residues 1–24 (MAMAEGERTECAETPRDEPPADGT) is disordered. Ala2 carries the post-translational modification N-acetylalanine. TPR repeat units lie at residues 28–61 (AEEL…NPGN), 62–95 (AIYY…DKKY), and 96–129 (IKGY…KPND). The segment at 184-499 (GKVTITFMKD…ANTLLQLGMM (316 aa)) is catalytic. Residues Asp242, His244, and Asp271 each contribute to the Mn(2+) site. His244 serves as a coordination point for substrate. Substrate is bound by residues Arg275 and 303–304 (NH). Position 303 (Asn303) interacts with Mn(2+). The active-site Proton donor/acceptor is His304. Residue His352 coordinates Mn(2+). Substrate is bound by residues Arg400 and His427. His427 lines the Mn(2+) pocket. The required for autoinhibition stretch occupies residues 495–499 (QLGMM).

This sequence belongs to the PPP phosphatase family. PP-5 (PP-T) subfamily. Probably forms a complex composed of chaperones HSP90 and HSP70, co-chaperones STIP1/HOP, CDC37, PPP5C, PTGES3/p23, TSC1 and client protein TSC2. Probably forms a complex composed of chaperones HSP90 and HSP70, co-chaperones CDC37, PPP5C, TSC1 and client protein TSC2, CDK4, AKT, RAF1 and NR3C1; this complex does not contain co-chaperones STIP1/HOP and PTGES3/p23. Part of a complex with HSP90/HSP90AA1 and steroid receptors. Interacts (via TPR repeats) with HSP90AA1 (via TPR repeat-binding motif) or HSPA1A/HSPA1B; the interaction is direct and activates the phosphatase activity. Dissociates from HSPA1A/HSPA1B and HSP90AA1 in response to arachidonic acid. Interacts with CPNE1 (via VWFA domain). Interacts with CDC16, CDC27. Interacts with KLHDC10 (via the 6 Kelch repeats); inhibits the phosphatase activity on MAP3K5. Interacts with ATM and ATR; both interactions are induced by DNA damage and enhance ATM and ATR kinase activity. Interacts with RAD17; reduced by DNA damage. Interacts with nuclear receptors such as NR3C1/GCR and PPARG (activated by agonist); regulates their transactivation activities. Interacts (via TPR repeats) with S100 proteins S100A1, S100A2, S100A6, S100B and S100P; the interactions are calcium-dependent, strongly activate PPP5C phosphatase activity and compete with HSP90AA1 and MAP3K5 interactions. Interacts with SMAD2 and SMAD3 but not with SMAD1; decreases SMAD3 phosphorylation and protein levels. Interacts (via TPR repeats) with CRY1 and CRY2; the interaction with CRY2 down-regulates the phosphatase activity on CSNK1E. Interacts (via TPR repeats) with the active form of RAC1, GNA12 or GNA13; these interactions activate the phosphatase activity and translocate PPP5C to the cell membrane. Interacts with FLCN. It depends on Mg(2+) as a cofactor. The cofactor is Mn(2+). In terms of processing, activated by at least two different proteolytic cleavages producing a 56 kDa and a 50 kDa form. Expressed in liver (at protein level) and brain, enriched in suprachiasmatic nuclei.

Its subcellular location is the nucleus. The protein localises to the cytoplasm. It is found in the cell membrane. The enzyme catalyses O-phospho-L-seryl-[protein] + H2O = L-seryl-[protein] + phosphate. The catalysed reaction is O-phospho-L-threonyl-[protein] + H2O = L-threonyl-[protein] + phosphate. Its activity is regulated as follows. Autoinhibited. In the autoinhibited state, the TPR domain interacts with the catalytic region and prevents substrate access to the catalytic pocket. Allosterically activated by various polyunsaturated fatty acids, free long-chain fatty-acids and long-chain fatty acyl-CoA esters, arachidonic acid being the most effective activator. HSP90A and probably RAC1, GNA12 and GNA13 can also release the autoinhibition by the TPR repeat. Activation by RAC1, GNA12 and GNA13 is synergistic with the one produced by fatty acids binding. Inhibited by okadaic acid. In terms of biological role, serine/threonine-protein phosphatase that dephosphorylates a myriad of proteins involved in different signaling pathways including the kinases CSNK1E, ASK1/MAP3K5, PRKDC and RAF1, the nuclear receptors NR3C1, PPARG, ESR1 and ESR2, SMAD proteins and TAU/MAPT. Implicated in wide ranging cellular processes, including apoptosis, differentiation, DNA damage response, cell survival, regulation of ion channels or circadian rhythms, in response to steroid and thyroid hormones, calcium, fatty acids, TGF-beta as well as oxidative and genotoxic stresses. Participates in the control of DNA damage response mechanisms such as checkpoint activation and DNA damage repair through, for instance, the regulation ATM/ATR-signaling and dephosphorylation of PRKDC and TP53BP1. Inhibits ASK1/MAP3K5-mediated apoptosis induced by oxidative stress. Plays a positive role in adipogenesis, mainly through the dephosphorylation and activation of PPARG transactivation function. Also dephosphorylates and inhibits the anti-adipogenic effect of NR3C1. Regulates the circadian rhythms, through the dephosphorylation and activation of CSNK1E. May modulate TGF-beta signaling pathway by the regulation of SMAD3 phosphorylation and protein expression levels. Dephosphorylates and may play a role in the regulation of TAU/MAPT. Through their dephosphorylation, may play a role in the regulation of ions channels such as KCNH2. Dephosphorylate FNIP1, disrupting interaction with HSP90AA1/Hsp90. This is Serine/threonine-protein phosphatase 5 (Ppp5c) from Mus musculus (Mouse).